Reading from the N-terminus, the 181-residue chain is Caveolin-1 (181 aa).

The Cytoplasmic segment spans residues 1–107; the sequence is MTGGLRDGEK…TKYWCYRLLT (107 aa). The helical intramembrane region spans 108–128; the sequence is ALVGIPLALIWGIFFAILSFI. The Cytoplasmic portion of the chain corresponds to 129–181; sequence HIWAVVPCVKSYLIEIHCISRVYSICVHTFCDPLFEAMGKCLGGVRIRTSKEV. S-palmitoyl cysteine attachment occurs at residues Cys136, Cys146, and Cys159.

It belongs to the caveolin family. In terms of assembly, homooligomer.

It is found in the golgi apparatus membrane. The protein localises to the cell membrane. Its subcellular location is the membrane. It localises to the caveola. The protein resides in the membrane raft. Functionally, may act as a positive regulator of T-cell coactivation. May act as a scaffolding protein within caveolar membranes. Interacts directly with G-protein alpha subunits and can functionally regulate their activity. The chain is Caveolin-1 (cav1) from Takifugu rubripes (Japanese pufferfish).